The chain runs to 870 residues: DNA mismatch repair protein MutS (870 aa).

Gly-620 to Ser-627 contacts ATP.

The protein belongs to the DNA mismatch repair MutS family.

Its function is as follows. This protein is involved in the repair of mismatches in DNA. It is possible that it carries out the mismatch recognition step. This protein has a weak ATPase activity. The protein is DNA mismatch repair protein MutS of Acetivibrio thermocellus (strain ATCC 27405 / DSM 1237 / JCM 9322 / NBRC 103400 / NCIMB 10682 / NRRL B-4536 / VPI 7372) (Clostridium thermocellum).